A 188-amino-acid polypeptide reads, in one-letter code: GMP synthase [glutamine-hydrolyzing] subunit A (188 aa).

The region spanning 1–188 (MIVIMDNGGQ…RNFAELCGEL (188 aa)) is the Glutamine amidotransferase type-1 domain. The active-site Nucleophile is the Cys78. Active-site residues include His165 and Glu167.

Heterodimer composed of a glutamine amidotransferase subunit (A) and a GMP-binding subunit (B).

It carries out the reaction XMP + L-glutamine + ATP + H2O = GMP + L-glutamate + AMP + diphosphate + 2 H(+). It participates in purine metabolism; GMP biosynthesis; GMP from XMP (L-Gln route): step 1/1. Catalyzes the synthesis of GMP from XMP. The sequence is that of GMP synthase [glutamine-hydrolyzing] subunit A from Thermococcus kodakarensis (strain ATCC BAA-918 / JCM 12380 / KOD1) (Pyrococcus kodakaraensis (strain KOD1)).